A 140-amino-acid chain; its full sequence is Transcription antitermination protein NusB (140 aa).

The protein belongs to the NusB family.

In terms of biological role, involved in transcription antitermination. Required for transcription of ribosomal RNA (rRNA) genes. Binds specifically to the boxA antiterminator sequence of the ribosomal RNA (rrn) operons. This chain is Transcription antitermination protein NusB, found in Pseudoalteromonas atlantica (strain T6c / ATCC BAA-1087).